The following is a 122-amino-acid chain: uncharacterized protein (122 aa).

A run of 3 helical transmembrane segments spans residues 33 to 53 (ALGLLAAAVALVQLVPELTIP), 58 to 78 (VLGVVLAILAILTSGMGLLRW), and 97 to 117 (PGYLAVGLCVVGVVALALVVA).

This sequence to E.coli YidH.

It is found in the cell membrane. This is an uncharacterized protein from Mycobacterium tuberculosis (strain CDC 1551 / Oshkosh).